Reading from the N-terminus, the 141-residue chain is Putative antiporter subunit mnhB2 (141 aa).

Transmembrane regions (helical) follow at residues 10 to 30 (TVTK…FFAG), 35 to 55 (GGGF…FLAF), 70 to 90 (ILMI…MFFG), and 114 to 134 (ITLF…TVML).

Belongs to the CPA3 antiporters (TC 2.A.63) subunit B family. In terms of assembly, may form a heterooligomeric complex that consists of seven subunits: mnhA2, mnhB2, mnhC2, mnhD2, mnhE2, mnhF2 and mnhG2.

The protein localises to the cell membrane. The polypeptide is Putative antiporter subunit mnhB2 (mnhB2) (Staphylococcus aureus (strain Mu3 / ATCC 700698)).